Here is a 109-residue protein sequence, read N- to C-terminus: Putative membrane protein insertion efficiency factor (109 aa).

The protein belongs to the UPF0161 family.

It is found in the cell inner membrane. Functionally, could be involved in insertion of integral membrane proteins into the membrane. The sequence is that of Putative membrane protein insertion efficiency factor from Rhodopseudomonas palustris (strain BisA53).